Consider the following 745-residue polypeptide: Mitogen-activated protein kinase kinase kinase zak-1 (745 aa).

The Protein kinase domain occupies 31-305 (IQVGDHIGVG…KVMDECEKFM (275 aa)). Residues 37–45 (IGVGTFGAV) and Lys63 contribute to the ATP site. The active-site Proton acceptor is Asp159. Positions 307–352 (LEDWKTEIEKQEKNVEKMRKDLEKRREQLEIREKALKQRMKVEQAV) form a coiled coil. Positions 366 to 438 (WSEHHTSHWV…MKMIRKLADT (73 aa)) constitute an SAM domain. The disordered stretch occupies residues 693–745 (LTRRRRTTTTNSEDTEKSDTNNKTPESQARRVHVHGGKDKWNWKKGKSRPKFT). The span at 735–745 (WKKGKSRPKFT) shows a compositional bias: basic residues.

The protein belongs to the protein kinase superfamily. STE Ser/Thr protein kinase family. MAP kinase kinase kinase subfamily. It depends on Mg(2+) as a cofactor. In terms of tissue distribution, widely expressed; expressed in most tissues, including intestines, muscle and the nervous system.

It localises to the cytoplasm. The protein resides in the nucleus. It catalyses the reaction L-seryl-[protein] + ATP = O-phospho-L-seryl-[protein] + ADP + H(+). The catalysed reaction is L-threonyl-[protein] + ATP = O-phospho-L-threonyl-[protein] + ADP + H(+). Stress-activated component of a protein kinase signal transduction cascade that promotes programmed cell death in response to ribotoxic stress. Acts as the proximal sensor of ribotoxic stress: directly binds to the ribosome, thereby acting as a sentinel for colliding ribosomes. Upon ribosome collisions, activates the stress-activated protein kinase signal transduction cascade, leading to programmed cell death. Acts by catalyzing phosphorylation of MAP kinase kinases, leading to activation of the JNK and MAP kinase p38 pathways. The polypeptide is Mitogen-activated protein kinase kinase kinase zak-1 (Caenorhabditis elegans).